Consider the following 193-residue polypeptide: Superoxide dismutase [Fe] (193 aa).

Fe cation-binding residues include histidine 27, histidine 74, aspartate 157, and histidine 161.

Belongs to the iron/manganese superoxide dismutase family. In terms of assembly, homodimer. Fe cation is required as a cofactor.

It carries out the reaction 2 superoxide + 2 H(+) = H2O2 + O2. In terms of biological role, destroys superoxide anion radicals which are normally produced within the cells and which are toxic to biological systems. In Salmonella typhimurium (strain LT2 / SGSC1412 / ATCC 700720), this protein is Superoxide dismutase [Fe] (sodB).